Consider the following 769-residue polypeptide: Ligand-dependent nuclear receptor-interacting factor 1 (769 aa).

Glycyl lysine isopeptide (Lys-Gly) (interchain with G-Cter in SUMO2) cross-links involve residues Lys259 and Lys279. Over residues 378-387 the composition is skewed to polar residues; the sequence is QIDQQNSVSP. Residues 378-400 are disordered; that stretch reads QIDQQNSVSPDTPVRKDTLQTVS. Ser402, Ser430, and Ser436 each carry phosphoserine. Residue Lys446 forms a Glycyl lysine isopeptide (Lys-Gly) (interchain with G-Cter in SUMO2) linkage. Ser502 carries the phosphoserine modification. A disordered region spans residues 528–562; it reads DQEPKIHNEMASTSDKGAQGRNDKKDSQGRSNKAL. The short motif at 580–584 is the PxVxL motif element; that stretch reads LRVCL. Phosphoserine is present on Ser599. Residue Lys605 forms a Glycyl lysine isopeptide (Lys-Gly) (interchain with G-Cter in SUMO2) linkage. 2 short sequence motifs (nuclear localization signal) span residues 628 to 631 and 642 to 645; these read KKRK. Lys702 participates in a covalent cross-link: Glycyl lysine isopeptide (Lys-Gly) (interchain with G-Cter in SUMO2). At Thr732 the chain carries Phosphothreonine. Residues 740–769 adopt a coiled-coil conformation; that stretch reads IRDEKIRRLKQVLREKEAALEEMRKKMHQK.

The protein belongs to the LRIF1 family. As to quaternary structure, interacts with RARA. Interacts with SMCHD1; leading to recruitment to inactivated chromosome X in females. Interacts (via PxVxL motif) with HP1 (CBX1/HP1-beta, CBX3/HP1-gamma and CBX5/HP1-alpha). As to expression, widely expressed, with the highest expression levels in heart, liver and placenta.

The protein resides in the chromosome. It localises to the nucleus matrix. Its function is as follows. Together with SMCHD1, involved in chromosome X inactivation in females by promoting the compaction of heterochromatin. Also able to repress the ligand-induced transcriptional activity of retinoic acid receptor alpha (RARA), possibly through direct recruitment of histone deacetylases. Also required for silencing of the DUX4 locus in somatic cells. This chain is Ligand-dependent nuclear receptor-interacting factor 1, found in Homo sapiens (Human).